The primary structure comprises 962 residues: Leucine--tRNA ligase (962 aa).

A 'HIGH' region motif is present at residues proline 68–histidine 79. The disordered stretch occupies residues aspartate 559–glutamate 582. Residues alanine 570 to serine 579 are compositionally biased toward polar residues. A 'KMSKS' region motif is present at residues lysine 733–serine 737. An ATP-binding site is contributed by lysine 736.

The protein belongs to the class-I aminoacyl-tRNA synthetase family.

It localises to the cytoplasm. It carries out the reaction tRNA(Leu) + L-leucine + ATP = L-leucyl-tRNA(Leu) + AMP + diphosphate. This is Leucine--tRNA ligase from Streptomyces avermitilis (strain ATCC 31267 / DSM 46492 / JCM 5070 / NBRC 14893 / NCIMB 12804 / NRRL 8165 / MA-4680).